Consider the following 65-residue polypeptide: UPF0434 protein bsr0601 (65 aa).

Belongs to the UPF0434 family.

The protein is UPF0434 protein bsr0601 of Bradyrhizobium diazoefficiens (strain JCM 10833 / BCRC 13528 / IAM 13628 / NBRC 14792 / USDA 110).